The sequence spans 204 residues: MECELVDLSNNNVGSVELNPLIFSAKQKLSILHDIVRWQLAKRRVGAHKTKGISDVSGTTAKPYGQKRTGRARQGSLRSPQFRGGGIIFGPVVRSHAYSLNKKVRKFGLKIALSLKYLNNQVVVLDSLNVDVKKTSKMCEYIKNFKFSSFLIVGDYGDDLLRAAKNLHYVDLIKPIGLNVFDILNHECVMLTKDTLKHLEGRLL.

The disordered stretch occupies residues 56–79 (VSGTTAKPYGQKRTGRARQGSLRS).

This sequence belongs to the universal ribosomal protein uL4 family. As to quaternary structure, part of the 50S ribosomal subunit.

One of the primary rRNA binding proteins, this protein initially binds near the 5'-end of the 23S rRNA. It is important during the early stages of 50S assembly. It makes multiple contacts with different domains of the 23S rRNA in the assembled 50S subunit and ribosome. In terms of biological role, forms part of the polypeptide exit tunnel. In Wolbachia pipientis subsp. Culex pipiens (strain wPip), this protein is Large ribosomal subunit protein uL4.